A 1408-amino-acid chain; its full sequence is DNA-directed RNA polymerase subunit beta' (1408 aa).

Zn(2+) contacts are provided by Cys-70, Cys-72, Cys-85, and Cys-88. Mg(2+)-binding residues include Asp-460, Asp-462, and Asp-464. Zn(2+) is bound by residues Cys-814, Cys-888, Cys-895, and Cys-898.

It belongs to the RNA polymerase beta' chain family. As to quaternary structure, the RNAP catalytic core consists of 2 alpha, 1 beta, 1 beta' and 1 omega subunit. When a sigma factor is associated with the core the holoenzyme is formed, which can initiate transcription. Mg(2+) is required as a cofactor. Requires Zn(2+) as cofactor.

The catalysed reaction is RNA(n) + a ribonucleoside 5'-triphosphate = RNA(n+1) + diphosphate. DNA-dependent RNA polymerase catalyzes the transcription of DNA into RNA using the four ribonucleoside triphosphates as substrates. The chain is DNA-directed RNA polymerase subunit beta' from Baumannia cicadellinicola subsp. Homalodisca coagulata.